A 103-amino-acid chain; its full sequence is Integration host factor subunit beta (103 aa).

Belongs to the bacterial histone-like protein family. Heterodimer of an alpha and a beta chain.

Its function is as follows. This protein is one of the two subunits of integration host factor, a specific DNA-binding protein that functions in genetic recombination as well as in transcriptional and translational control. This Bradyrhizobium sp. (strain BTAi1 / ATCC BAA-1182) protein is Integration host factor subunit beta.